The sequence spans 243 residues: Probable phosphatase CLD_1129 (243 aa).

Zn(2+) contacts are provided by histidine 8, histidine 10, histidine 16, histidine 41, glutamate 74, histidine 102, histidine 132, aspartate 192, and histidine 194.

It belongs to the PHP family. The cofactor is Zn(2+).

The chain is Probable phosphatase CLD_1129 from Clostridium botulinum (strain Okra / Type B1).